The chain runs to 169 residues: ATP-dependent Clp protease adapter protein CLPS2, chloroplastic (169 aa).

Residues 1-33 (MLATRCKCNLPSRSFVAPARSVRTRALHVEGRF) constitute a chloroplast transit peptide. The interval 67–92 (DAKTDNGNNGSNTDKDKKSPPGGGNY) is disordered.

Belongs to the ClpS family.

Its subcellular location is the plastid. The protein resides in the chloroplast stroma. Functionally, small adapter protein that modulate the activity of plastid Clp protease system (CLPC). Probably involved in substrate selection for plastid CLPC. This Chlamydomonas reinhardtii (Chlamydomonas smithii) protein is ATP-dependent Clp protease adapter protein CLPS2, chloroplastic.